Reading from the N-terminus, the 464-residue chain is Methylenetetrahydrofolate--tRNA-(uracil-5-)-methyltransferase TrmFO (464 aa).

Gly-13–Gly-18 is an FAD binding site.

The protein belongs to the MnmG family. TrmFO subfamily. It depends on FAD as a cofactor.

Its subcellular location is the cytoplasm. The catalysed reaction is uridine(54) in tRNA + (6R)-5,10-methylene-5,6,7,8-tetrahydrofolate + NADH + H(+) = 5-methyluridine(54) in tRNA + (6S)-5,6,7,8-tetrahydrofolate + NAD(+). The enzyme catalyses uridine(54) in tRNA + (6R)-5,10-methylene-5,6,7,8-tetrahydrofolate + NADPH + H(+) = 5-methyluridine(54) in tRNA + (6S)-5,6,7,8-tetrahydrofolate + NADP(+). Its function is as follows. Catalyzes the folate-dependent formation of 5-methyl-uridine at position 54 (M-5-U54) in all tRNAs. The chain is Methylenetetrahydrofolate--tRNA-(uracil-5-)-methyltransferase TrmFO from Bartonella bacilliformis (strain ATCC 35685 / KC583 / Herrer 020/F12,63).